Reading from the N-terminus, the 554-residue chain is Phospholipase B-like protein E (554 aa).

A signal peptide spans 1-19 (MKLFILLIVIVFLISNSYS). Asparagine 113, asparagine 140, asparagine 231, asparagine 302, asparagine 340, and asparagine 546 each carry an N-linked (GlcNAc...) asparagine glycan.

This sequence belongs to the phospholipase B-like family.

The protein resides in the secreted. Probable phospholipase. The protein is Phospholipase B-like protein E (plbE) of Dictyostelium discoideum (Social amoeba).